We begin with the raw amino-acid sequence, 306 residues long: tRNA dimethylallyltransferase (306 aa).

12–19 (GPTASGKT) provides a ligand contact to ATP. 14 to 19 (TASGKT) contributes to the substrate binding site. 3 interaction with substrate tRNA regions span residues 37–40 (DSAL), 161–165 (QRLSR), and 242–247 (RCVGYR).

Belongs to the IPP transferase family. As to quaternary structure, monomer. The cofactor is Mg(2+).

The catalysed reaction is adenosine(37) in tRNA + dimethylallyl diphosphate = N(6)-dimethylallyladenosine(37) in tRNA + diphosphate. Catalyzes the transfer of a dimethylallyl group onto the adenine at position 37 in tRNAs that read codons beginning with uridine, leading to the formation of N6-(dimethylallyl)adenosine (i(6)A). In Shewanella amazonensis (strain ATCC BAA-1098 / SB2B), this protein is tRNA dimethylallyltransferase.